The chain runs to 201 residues: uncharacterized protein (201 aa).

In terms of domain architecture, Bro-N spans 15–122 (KNQIQFSTFN…EVLPQIRKTG (108 aa)).

This is an uncharacterized protein from Haemophilus influenzae (strain ATCC 51907 / DSM 11121 / KW20 / Rd).